The primary structure comprises 900 residues: Translation initiation factor IF-2 (900 aa).

Basic and acidic residues-rich tracts occupy residues 119-158, 165-191, and 198-229; these read AAKA…EKQE, ADEK…KADA, and EEAR…DHHV. The tract at residues 119-306 is disordered; it reads AAKAEAEAKA…NARSVAPESM (188 aa). Residues 257–272 are compositionally biased toward low complexity; that stretch reads SANAGNNANSNSNAGS. The tr-type G domain occupies 400–569; it reads PRAPVVTIMG…LLESEVLELK (170 aa). The tract at residues 409 to 416 is G1; the sequence is GHVDHGKT. Position 409–416 (409–416) interacts with GTP; it reads GHVDHGKT. A G2 region spans residues 434-438; it reads GITQH. The interval 455-458 is G3; sequence DTPG. Residues 455 to 459 and 509 to 512 each bind GTP; these read DTPGH and NKID. Residues 509 to 512 form a G4 region; sequence NKID. The interval 545 to 547 is G5; sequence SAK.

The protein belongs to the TRAFAC class translation factor GTPase superfamily. Classic translation factor GTPase family. IF-2 subfamily.

The protein localises to the cytoplasm. Functionally, one of the essential components for the initiation of protein synthesis. Protects formylmethionyl-tRNA from spontaneous hydrolysis and promotes its binding to the 30S ribosomal subunits. Also involved in the hydrolysis of GTP during the formation of the 70S ribosomal complex. The protein is Translation initiation factor IF-2 of Shewanella piezotolerans (strain WP3 / JCM 13877).